Consider the following 1513-residue polypeptide: MAERANLVFQNKEIDGTAMKRLISRLIDHFGMGYTSHILDQIKTLGFHQATTTSISLGIEDLLTIPSKGWLVQDAEQQSFLLEKHYYYGAVHAVEKLRQSVEIWYATSEYLKHEMNSNFRITDPSNPVYLMSFSGARGNASQVHQLVGMRGLMADPQGQMIDLPIQSNLREGLSLTEYIISCYGARKGVVDTAVRTADAGYLTRRLVEVVQHIIVRRRDCGTIQAISVSPQNGMTEKLFVQTLIGRVLANDIYIGSRCIATRNQDIGIGLVNRFITTFRAQPFRAQPIYIRTPFTCRSTSWICQLCYGRSSTHGDLVELGEAVGVIAGQSIGEPGTQLTLRTFHTGGVFTGGTADLVRSPSNGKIQFNGDLVHPTRTRHGQPAFLCYIDLHITIQSQDILHSVTIPSKSLILVQNDQYVESEQVIAEIRAGTSALHFKEKVQKHIYSESDGEMHWSTDVYHAPEYQYGNLRRLPKTSHLWILSVSMCRSSIASFSLHKDQDQMNTYSFSVDGRYIFGLSMADDEVRHRLLDTFGKKDREILDYSTPDRIMSNGHWNFVYPSILQNNFDLLAKKRRNRFAIPLQYHQEQEKEPISCFGISIEIPFMGVLRRNTIVAYFDDPRYKKDKKGSGIVKFRYRTLEDEYRTREKDSENEYGSPENEYRTREEECKTLEDEYRTREEEYETLEDEYGIPENEYETLEDEYGILEDEYRTREEESEDEYGSPENKYRPREDKYGTLEEDSEDEHGTLEEDSEEDSEDEYGNPEEDSVLKKGVLIEHRGTKEFSLKYQKEVDRFFFILQELHILPRSSSLKVLDNSIIGVDTQLTKNTRSRLGGLVRVKRKKSHTELKIFSGDIHFPEEADKILGGSLIPLEREKKDSKESKKRENWVYVQWKKILKSKEKYFVLVRPAVAYEMNEGRNLATLFPQDLLQEEGNLQLRLVNFISHENSKLTQRIYHTNSQFVRTCLVLNWEQEEKEEARASLVEIRANGLIRDFLRIGLIKSTISYTRKRYDSRSAGLILHNRLDRTNTNSFYSKAKIQSLSQHQEAIGTLLNRNKEYQSLMVLSASNCSRIGFFKNSKNPNGVKESNPRIPIPKFFGLFRNFSGLLGTIAPSISNFSSSYYLLTYNQILLKKHLLLDNLKQNFKVLQGLKHSLINENQRTSNFDSNIMLDPFQLNWHFLPHDSWEETSAKIHLGQFICENVCLFKSHIKKSGQIFIVNIDSFVIRAAKPYLATTGATVHGHYGEILYKGDRLVTFIYEKARSSDITQGLPKVEQIFEARSIDSLSPNLERRIEDWNERIPRILGGPWGFLIGAELTIAQSRISLVNKIQKVYRSQGVQIHNRHIEIIIRQVTSKVRVSEDGMSNVFSPGELIGLLRAERAGRALDESIYYRAILLGITRVSLNTQSFISEASFQETARVLAKAALRGRIDWLKGLKENVVLGGIIPVGTGFQKFVHRYPQDKNLYFEIQKKKLFASEMRDILFLHTELVSSDSDVTNNFYETSESPFTPFI.

Cysteine 220, cysteine 296, cysteine 303, and cysteine 306 together coordinate Zn(2+). Residues 644 to 769 (RTREKDSENE…EYGNPEEDSV (126 aa)) form a disordered region. Over residues 659 to 679 (NEYRTREEECKTLEDEYRTRE) the composition is skewed to basic and acidic residues. The span at 680–707 (EEYETLEDEYGIPENEYETLEDEYGILE) shows a compositional bias: acidic residues. Basic and acidic residues predominate over residues 726–737 (NKYRPREDKYGT). Acidic residues predominate over residues 738-767 (LEEDSEDEHGTLEEDSEEDSEDEYGNPEED).

Belongs to the RNA polymerase beta' chain family. RpoC2 subfamily. As to quaternary structure, in plastids the minimal PEP RNA polymerase catalytic core is composed of four subunits: alpha, beta, beta', and beta''. When a (nuclear-encoded) sigma factor is associated with the core the holoenzyme is formed, which can initiate transcription. Zn(2+) is required as a cofactor.

It localises to the plastid. Its subcellular location is the chloroplast. The enzyme catalyses RNA(n) + a ribonucleoside 5'-triphosphate = RNA(n+1) + diphosphate. Its function is as follows. DNA-dependent RNA polymerase catalyzes the transcription of DNA into RNA using the four ribonucleoside triphosphates as substrates. The sequence is that of DNA-directed RNA polymerase subunit beta'' from Oryza nivara (Indian wild rice).